The following is a 242-amino-acid chain: ATP-dependent dethiobiotin synthetase BioD (242 aa).

ATP is bound at residue 12 to 17 (EVGKTV). T16 serves as a coordination point for Mg(2+). The active site involves K37. Residue S41 coordinates substrate. ATP contacts are provided by residues D51 and 112-115 (EGAG). 2 residues coordinate Mg(2+): D51 and E112.

It belongs to the dethiobiotin synthetase family. As to quaternary structure, homodimer. Mg(2+) serves as cofactor.

Its subcellular location is the cytoplasm. It carries out the reaction (7R,8S)-7,8-diammoniononanoate + CO2 + ATP = (4R,5S)-dethiobiotin + ADP + phosphate + 3 H(+). Its pathway is cofactor biosynthesis; biotin biosynthesis; biotin from 7,8-diaminononanoate: step 1/2. Catalyzes a mechanistically unusual reaction, the ATP-dependent insertion of CO2 between the N7 and N8 nitrogen atoms of 7,8-diaminopelargonic acid (DAPA, also called 7,8-diammoniononanoate) to form a ureido ring. The chain is ATP-dependent dethiobiotin synthetase BioD from Bacillus thuringiensis subsp. konkukian (strain 97-27).